The sequence spans 131 residues: Small ribosomal subunit protein eS24 (131 aa).

At M1 the chain carries N-acetylmethionine. T9 carries the phosphothreonine modification. K37 is covalently cross-linked (Glycyl lysine isopeptide (Lys-Gly) (interchain with G-Cter in SUMO2)). Residues 90-100 (RLARHGLYEKK) show a composition bias toward basic and acidic residues. The segment at 90 to 131 (RLARHGLYEKKKTSRKQRKERKNRMKKVRGTAKANVGAGKKK) is disordered. The span at 101-119 (KTSRKQRKERKNRMKKVRG) shows a compositional bias: basic residues.

It belongs to the eukaryotic ribosomal protein eS24 family. In terms of assembly, component of the small ribosomal subunit. Part of the small subunit (SSU) processome, composed of more than 70 proteins and the RNA chaperone small nucleolar RNA (snoRNA) U3.

The protein localises to the cytoplasm. The protein resides in the nucleus. It is found in the nucleolus. Component of the small ribosomal subunit. The ribosome is a large ribonucleoprotein complex responsible for the synthesis of proteins in the cell. Required for processing of pre-rRNA and maturation of 40S ribosomal subunits. Part of the small subunit (SSU) processome, first precursor of the small eukaryotic ribosomal subunit. During the assembly of the SSU processome in the nucleolus, many ribosome biogenesis factors, an RNA chaperone and ribosomal proteins associate with the nascent pre-rRNA and work in concert to generate RNA folding, modifications, rearrangements and cleavage as well as targeted degradation of pre-ribosomal RNA by the RNA exosome. This Macaca fascicularis (Crab-eating macaque) protein is Small ribosomal subunit protein eS24 (RPS24).